Consider the following 173-residue polypeptide: NAD(P)H-quinone oxidoreductase subunit J (173 aa).

It belongs to the complex I 30 kDa subunit family. As to quaternary structure, NDH-1 can be composed of about 15 different subunits; different subcomplexes with different compositions have been identified which probably have different functions.

Its subcellular location is the cellular thylakoid membrane. The catalysed reaction is a plastoquinone + NADH + (n+1) H(+)(in) = a plastoquinol + NAD(+) + n H(+)(out). The enzyme catalyses a plastoquinone + NADPH + (n+1) H(+)(in) = a plastoquinol + NADP(+) + n H(+)(out). In terms of biological role, NDH-1 shuttles electrons from an unknown electron donor, via FMN and iron-sulfur (Fe-S) centers, to quinones in the respiratory and/or the photosynthetic chain. The immediate electron acceptor for the enzyme in this species is believed to be plastoquinone. Couples the redox reaction to proton translocation, and thus conserves the redox energy in a proton gradient. Cyanobacterial NDH-1 also plays a role in inorganic carbon-concentration. The protein is NAD(P)H-quinone oxidoreductase subunit J of Prochlorococcus marinus (strain NATL2A).